Consider the following 353-residue polypeptide: UPF0283 membrane protein YcjF (353 aa).

The span at 1 to 19 (MSEPLKPRIDFAEPLKEEP) shows a compositional bias: basic and acidic residues. Residues 1-35 (MSEPLKPRIDFAEPLKEEPTSAFKAQQTFSEAESR) are disordered. The next 3 helical transmembrane spans lie at 70-90 (MVMGGLALFGASVVGQGLQWT), 100-120 (VALGGCAAGALIIGAGVGSVV), and 213-233 (ESTLMIAVSPLALVDMAFIAW).

The protein belongs to the UPF0283 family.

It is found in the cell inner membrane. The sequence is that of UPF0283 membrane protein YcjF from Salmonella choleraesuis (strain SC-B67).